A 1323-amino-acid polypeptide reads, in one-letter code: DNA-directed RNA polymerase subunit beta' (1323 aa).

Zn(2+) is bound by residues C60, C62, C75, and C78. Residues D535, D537, and D539 each coordinate Mg(2+). Residues C894, C977, C984, and C987 each contribute to the Zn(2+) site.

Belongs to the RNA polymerase beta' chain family. As to quaternary structure, the RNAP catalytic core consists of 2 alpha, 1 beta, 1 beta' and 1 omega subunit. When a sigma factor is associated with the core the holoenzyme is formed, which can initiate transcription. Requires Mg(2+) as cofactor. It depends on Zn(2+) as a cofactor.

It carries out the reaction RNA(n) + a ribonucleoside 5'-triphosphate = RNA(n+1) + diphosphate. DNA-dependent RNA polymerase catalyzes the transcription of DNA into RNA using the four ribonucleoside triphosphates as substrates. This chain is DNA-directed RNA polymerase subunit beta', found in Corynebacterium jeikeium (strain K411).